The primary structure comprises 269 residues: MAPLRILISNDDGVFADGIRTLAAAAAARGHQVTVVCPDQERSATGHGLTLQTPIRAERADELFAPGVTAWACSGTPADCMKLALFELVKEKPNLVLSGINHGPNLGTDVFCSGTVAAAMEGTLEGIRSLAVSSACFQWRQFQAAADLALEVSEQAIADQWPDNLLLNLNIPPCAREEMGALRWTRLSIRRYDEQFSRREDPRGRAYYWLAGEAVQDLESAGEGPRDWPSDVAQIHANSPSLTPIQPDLFWRGPLSGLPQLKLKDQLVR.

Residues D11, D12, S43, and N101 each coordinate a divalent metal cation.

The protein belongs to the SurE nucleotidase family. A divalent metal cation is required as a cofactor.

It is found in the cytoplasm. It carries out the reaction a ribonucleoside 5'-phosphate + H2O = a ribonucleoside + phosphate. Functionally, nucleotidase that shows phosphatase activity on nucleoside 5'-monophosphates. The chain is 5'-nucleotidase SurE from Synechococcus sp. (strain CC9605).